The sequence spans 380 residues: Protein Wnt-5a (380 aa).

The N-terminal stretch at 1-35 (MKKSIGILSPGVALGMAGSAMSSKFFLVALAIFFS) is a signal peptide. A propeptide spanning residues 36–61 (FAQVVIEANSWWSLGMNNPVQMSEVY) is cleaved from the precursor. Cys-104 and Cys-115 are joined by a disulfide. Residues Asn-114 and Asn-120 are each glycosylated (N-linked (GlcNAc...) asparagine). 10 cysteine pairs are disulfide-bonded: Cys-154–Cys-162, Cys-164–Cys-182, Cys-238–Cys-252, Cys-240–Cys-247, Cys-309–Cys-340, Cys-325–Cys-335, Cys-339–Cys-379, Cys-355–Cys-370, Cys-357–Cys-367, and Cys-362–Cys-363. Ser-244 is lipidated: O-palmitoleoyl serine; by PORCN. N-linked (GlcNAc...) asparagine glycans are attached at residues Asn-312 and Asn-326.

Belongs to the Wnt family. As to quaternary structure, forms a soluble 1:1 complex with AFM; this prevents oligomerization and is required for prolonged biological activity. The complex with AFM may represent the physiological form in body fluids. Homooligomer; disulfide-linked, leading to inactivation (in vitro). Interacts with PORCN. Interacts with WLS. Interacts with glypican GCP3. Interacts with PKD1 (via extracellular domain). Interacts with TMEM67. Glycosylation is necessary for secretion but not for activity. In terms of processing, palmitoleoylation is required for efficient binding to frizzled receptors. Depalmitoleoylation leads to Wnt signaling pathway inhibition. Post-translationally, proteolytic processing by TIKI1 and TIKI2 promotes oxidation and formation of large disulfide-bond oligomers, leading to inactivation of WNT5A. As to expression, expression is increased in differentiated thyroid carcinomas compared to normal thyroid tissue and anaplastic thyroid tumors where expression is low or undetectable. Expression is found in thyrocytes but not in stromal cells (at protein level). Detected in neonate heart and lung.

The protein localises to the secreted. The protein resides in the extracellular space. Its subcellular location is the extracellular matrix. Functionally, ligand for members of the frizzled family of seven transmembrane receptors. Can activate or inhibit canonical Wnt signaling, depending on receptor context. In the presence of FZD4, activates beta-catenin signaling. In the presence of ROR2, inhibits the canonical Wnt pathway by promoting beta-catenin degradation through a GSK3-independent pathway which involves down-regulation of beta-catenin-induced reporter gene expression. Suppression of the canonical pathway allows chondrogenesis to occur and inhibits tumor formation. Stimulates cell migration. Decreases proliferation, migration, invasiveness and clonogenicity of carcinoma cells and may act as a tumor suppressor. Mediates motility of melanoma cells. Required during embryogenesis for extension of the primary anterior-posterior axis and for outgrowth of limbs and the genital tubercle. Inhibits type II collagen expression in chondrocytes. The polypeptide is Protein Wnt-5a (WNT5A) (Homo sapiens (Human)).